The sequence spans 114 residues: Probable non-functional T cell receptor beta variable 6-7 (114 aa).

An N-terminal signal peptide occupies residues 1–21 (MSLGLLCCVAFSLLWAGPMNA). The region spanning 22 to 114 (GVTQTPKFHV…TSVYFCASSY (93 aa)) is the Ig-like domain. Residues cysteine 42 and cysteine 110 are joined by a disulfide bond. Asparagine 84 carries an N-linked (GlcNAc...) asparagine glycan.

As to quaternary structure, alpha-beta TR is a heterodimer composed of an alpha and beta chain; disulfide-linked. The alpha-beta TR is associated with the transmembrane signaling CD3 coreceptor proteins to form the TR-CD3 (TcR or TCR). The assembly of alpha-beta TR heterodimers with CD3 occurs in the endoplasmic reticulum where a single alpha-beta TR heterodimer associates with one CD3D-CD3E heterodimer, one CD3G-CD3E heterodimer and one CD247 homodimer forming a stable octameric structure. CD3D-CD3E and CD3G-CD3E heterodimers preferentially associate with TR alpha and TR beta chains, respectively. The association of the CD247 homodimer is the last step of TcR assembly in the endoplasmic reticulum and is required for transport to the cell surface.

The protein resides in the cell membrane. In terms of biological role, probable non-functional open reading frame (ORF) of V region of the variable domain of T cell receptor (TR) beta chain. Non-functional ORF generally cannot participate in the synthesis of a productive T cell receptor (TR) chain due to altered V-(D)-J or switch recombination and/or splicing site (at mRNA level) and/or conserved amino acid change (protein level). Alpha-beta T cell receptors are antigen specific receptors which are essential to the immune response and are present on the cell surface of T lymphocytes. Recognize peptide-major histocompatibility (MH) (pMH) complexes that are displayed by antigen presenting cells (APC), a prerequisite for efficient T cell adaptive immunity against pathogens. Binding of alpha-beta TR to pMH complex initiates TR-CD3 clustering on the cell surface and intracellular activation of LCK that phosphorylates the ITAM motifs of CD3G, CD3D, CD3E and CD247 enabling the recruitment of ZAP70. In turn ZAP70 phosphorylates LAT, which recruits numerous signaling molecules to form the LAT signalosome. The LAT signalosome propagates signal branching to three major signaling pathways, the calcium, the mitogen-activated protein kinase (MAPK) kinase and the nuclear factor NF-kappa-B (NF-kB) pathways, leading to the mobilization of transcription factors that are critical for gene expression and essential for T cell growth and differentiation. The T cell repertoire is generated in the thymus, by V-(D)-J rearrangement. This repertoire is then shaped by intrathymic selection events to generate a peripheral T cell pool of self-MH restricted, non-autoaggressive T cells. Post-thymic interaction of alpha-beta TR with the pMH complexes shapes TR structural and functional avidity. The polypeptide is Probable non-functional T cell receptor beta variable 6-7 (Homo sapiens (Human)).